The chain runs to 319 residues: 1-aminocyclopropane-1-carboxylate oxidase (319 aa).

A Fe2OG dioxygenase domain is found at 153–253; it reads PTFGTKVSNY…RMSIASFYNP (101 aa). 3 residues coordinate Fe cation: His177, Asp179, and His234.

Belongs to the iron/ascorbate-dependent oxidoreductase family. It depends on Fe cation as a cofactor.

It carries out the reaction 1-aminocyclopropane-1-carboxylate + L-ascorbate + O2 = ethene + L-dehydroascorbate + hydrogen cyanide + CO2 + 2 H2O. It participates in alkene biosynthesis; ethylene biosynthesis via S-adenosyl-L-methionine; ethylene from S-adenosyl-L-methionine: step 2/2. The chain is 1-aminocyclopropane-1-carboxylate oxidase (ACO) from Actinidia deliciosa (Kiwi).